The primary structure comprises 392 residues: S-adenosylmethionine synthase (392 aa).

ATP is bound at residue H17. Mg(2+) is bound at residue D19. E45 contacts K(+). Residues E58 and Q102 each contribute to the L-methionine site. Positions 102-112 (QSADIAQGVDA) are flexible loop. ATP contacts are provided by residues 169 to 171 (DAK), 235 to 236 (KF), D244, 250 to 251 (RK), A267, and K271. L-methionine is bound at residue D244. K275 contributes to the L-methionine binding site.

This sequence belongs to the AdoMet synthase family. As to quaternary structure, homotetramer; dimer of dimers. Mg(2+) serves as cofactor. Requires K(+) as cofactor.

The protein localises to the cytoplasm. It carries out the reaction L-methionine + ATP + H2O = S-adenosyl-L-methionine + phosphate + diphosphate. It participates in amino-acid biosynthesis; S-adenosyl-L-methionine biosynthesis; S-adenosyl-L-methionine from L-methionine: step 1/1. Functionally, catalyzes the formation of S-adenosylmethionine (AdoMet) from methionine and ATP. The overall synthetic reaction is composed of two sequential steps, AdoMet formation and the subsequent tripolyphosphate hydrolysis which occurs prior to release of AdoMet from the enzyme. This chain is S-adenosylmethionine synthase, found in Methylobacterium sp. (strain 4-46).